Consider the following 394-residue polypeptide: Flavohemoprotein (394 aa).

The region spanning Met1–Gly138 is the Globin domain. His85 serves as a coordination point for heme b. Residues Tyr95 and Glu137 each act as charge relay system in the active site. The tract at residues Gly149–Ala394 is reductase. Positions Arg152–Val262 constitute an FAD-binding FR-type domain. FAD is bound by residues Tyr190 and Arg206–Ser209. Residue Gly274–Pro279 participates in NADP(+) binding. Val385–Pro388 is a binding site for FAD.

The protein belongs to the globin family. Two-domain flavohemoproteins subfamily. It in the C-terminal section; belongs to the flavoprotein pyridine nucleotide cytochrome reductase family. Requires heme b as cofactor. It depends on FAD as a cofactor.

The enzyme catalyses 2 nitric oxide + NADPH + 2 O2 = 2 nitrate + NADP(+) + H(+). It catalyses the reaction 2 nitric oxide + NADH + 2 O2 = 2 nitrate + NAD(+) + H(+). In terms of biological role, is involved in NO detoxification in an aerobic process, termed nitric oxide dioxygenase (NOD) reaction that utilizes O(2) and NAD(P)H to convert NO to nitrate, which protects the bacterium from various noxious nitrogen compounds. Therefore, plays a central role in the inducible response to nitrosative stress. The chain is Flavohemoprotein (hmp) from Vibrio cholerae serotype O1 (strain ATCC 39315 / El Tor Inaba N16961).